The primary structure comprises 547 residues: CTP synthase (547 aa).

Positions 1-265 are amidoligase domain; sequence MARFIFITGG…DQAVLDAFQI (265 aa). Ser13 contacts CTP. A UTP-binding site is contributed by Ser13. ATP-binding positions include 14 to 19 and Asp71; that span reads SLGKGL. The Mg(2+) site is built by Asp71 and Glu139. CTP-binding positions include 146-148, 186-191, and Lys222; these read DIE and KTKPTQ. Residues 186-191 and Lys222 each bind UTP; that span reads KTKPTQ. Residues 291–546 enclose the Glutamine amidotransferase type-1 domain; the sequence is KIAIVGKYVQ…VRAAKESSRL (256 aa). Gly353 is an L-glutamine binding site. The active-site Nucleophile; for glutamine hydrolysis is Cys380. L-glutamine-binding positions include 381–384, Glu404, and Arg474; that span reads LGMQ. Catalysis depends on residues His519 and Glu521.

It belongs to the CTP synthase family. Homotetramer.

It carries out the reaction UTP + L-glutamine + ATP + H2O = CTP + L-glutamate + ADP + phosphate + 2 H(+). It catalyses the reaction L-glutamine + H2O = L-glutamate + NH4(+). The catalysed reaction is UTP + NH4(+) + ATP = CTP + ADP + phosphate + 2 H(+). It functions in the pathway pyrimidine metabolism; CTP biosynthesis via de novo pathway; CTP from UDP: step 2/2. Its activity is regulated as follows. Allosterically activated by GTP, when glutamine is the substrate; GTP has no effect on the reaction when ammonia is the substrate. The allosteric effector GTP functions by stabilizing the protein conformation that binds the tetrahedral intermediate(s) formed during glutamine hydrolysis. Inhibited by the product CTP, via allosteric rather than competitive inhibition. In terms of biological role, catalyzes the ATP-dependent amination of UTP to CTP with either L-glutamine or ammonia as the source of nitrogen. Regulates intracellular CTP levels through interactions with the four ribonucleotide triphosphates. The protein is CTP synthase of Ruegeria pomeroyi (strain ATCC 700808 / DSM 15171 / DSS-3) (Silicibacter pomeroyi).